The sequence spans 143 residues: Large ribosomal subunit protein uL13 (143 aa).

The protein belongs to the universal ribosomal protein uL13 family. In terms of assembly, part of the 50S ribosomal subunit.

This protein is one of the early assembly proteins of the 50S ribosomal subunit, although it is not seen to bind rRNA by itself. It is important during the early stages of 50S assembly. In Carboxydothermus hydrogenoformans (strain ATCC BAA-161 / DSM 6008 / Z-2901), this protein is Large ribosomal subunit protein uL13.